The chain runs to 244 residues: 14-3-3 protein beta/alpha-1 (244 aa).

Met-1 bears the N-acetylmethionine mark.

It belongs to the 14-3-3 family. In terms of assembly, homodimer, and heterodimer with other family members. Expressed in brain, gill, heart, intestine, kidney, liver, ovary, skin, spleen and testis.

Its subcellular location is the cytoplasm. Adapter protein implicated in the regulation of a large spectrum of both general and specialized signaling pathways. Binds to a large number of partners, usually by recognition of a phosphoserine or phosphothreonine motif. Binding generally results in the modulation of the activity of the binding partner. The protein is 14-3-3 protein beta/alpha-1 of Oncorhynchus mykiss (Rainbow trout).